The sequence spans 265 residues: Undecaprenyl-diphosphatase (265 aa).

The next 7 helical transmembrane spans lie at 41–61 (IAYT…LIYF), 75–95 (LKFL…LYVI), 104–124 (YNPS…GIYI), 137–157 (LSTK…LPGV), 180–200 (YSYL…LLFT), 215–235 (GIAL…GFLL), and 244–264 (YLID…GLII).

It belongs to the UppP family.

Its subcellular location is the cell membrane. The enzyme catalyses di-trans,octa-cis-undecaprenyl diphosphate + H2O = di-trans,octa-cis-undecaprenyl phosphate + phosphate + H(+). In terms of biological role, catalyzes the dephosphorylation of undecaprenyl diphosphate (UPP). The sequence is that of Undecaprenyl-diphosphatase from Saccharolobus islandicus (strain Y.N.15.51 / Yellowstone #2) (Sulfolobus islandicus).